The chain runs to 132 residues: MAAGRVKRTTRRKKERKNVEHGCAHIRSTFNNSIVTITDAAGNTLSWASAGGLGFRGSRKSTPFAAQMAAETSAKAAMEHGLKSIEVYVKGPGSGREAAIRSLQAAGLEVTLIKDVTPIPHNGCRPPKRRRV.

This sequence belongs to the universal ribosomal protein uS11 family. In terms of assembly, part of the 30S ribosomal subunit. Interacts with proteins S7 and S18. Binds to IF-3.

Located on the platform of the 30S subunit, it bridges several disparate RNA helices of the 16S rRNA. Forms part of the Shine-Dalgarno cleft in the 70S ribosome. This Clostridium kluyveri (strain NBRC 12016) protein is Small ribosomal subunit protein uS11.